Reading from the N-terminus, the 206-residue chain is Transcription factor MYB57 (206 aa).

A compositionally biased stretch (basic residues) spans 1–11; the sequence is METTMKKKGRV. A disordered region spans residues 1-20; it reads METTMKKKGRVKATITSQKE. HTH myb-type domains lie at 22–74 and 75–129; these read EGTV…LNYL and RPDV…QRHM. 2 consecutive DNA-binding regions (H-T-H motif) follow at residues 50-74 and 102-125; these read WNSV…LNYL and WSKI…RTKI. The disordered stretch occupies residues 138-162; sequence NHQHHCSGNSQSSGMTTQGSSGKAI. The span at 144 to 159 shows a compositional bias: low complexity; it reads SGNSQSSGMTTQGSSG.

As to expression, expressed specifically in flowers.

It localises to the nucleus. Its function is as follows. Transcription factor acting redundantly with MYB21 and MYB24 to control stamen filament elongation in the late developed flowers. Repressed at the transcript levels by DELLA proteins. The polypeptide is Transcription factor MYB57 (MYB57) (Arabidopsis thaliana (Mouse-ear cress)).